The sequence spans 204 residues: N-(5'-phosphoribosyl)anthranilate isomerase (204 aa).

Belongs to the TrpF family.

It catalyses the reaction N-(5-phospho-beta-D-ribosyl)anthranilate = 1-(2-carboxyphenylamino)-1-deoxy-D-ribulose 5-phosphate. It participates in amino-acid biosynthesis; L-tryptophan biosynthesis; L-tryptophan from chorismate: step 3/5. In Bacillus cereus (strain AH820), this protein is N-(5'-phosphoribosyl)anthranilate isomerase.